The following is a 465-amino-acid chain: Ribosome biogenesis protein YTM1 (465 aa).

The tract at residues 18–99 (ARLRFSTRDE…ETTLDVEYVR (82 aa)) is ubiquitin-like (UBL) domain. WD repeat units follow at residues 111–153 (LHDD…IHTS), 160–198 (GHQS…KGIT), 205–242 (GHKG…SPAV), 277–317 (GHTA…LVDT), 319–358 (TTSH…TTVS), 364–404 (GHTN…TDTD), and 427–465 (GDGV…PKTA). The tract at residues 235 to 272 (KKSESPAVPQNLLPSSSARSSKRRKLNSSASTSQRGPL) is disordered.

The protein belongs to the WD repeat WDR12/YTM1 family. In terms of assembly, component of the NOP7 complex, composed of ERB1, NOP7 and YTM1. The complex is held together by ERB1, which interacts with NOP7 via its N-terminal domain and with YTM1 via a high-affinity interaction between the seven-bladed beta-propeller domains of the 2 proteins. The NOP7 complex associates with the 66S pre-ribosome. Interacts (via UBL domain) with MDN1 (via VWFA/MIDAS domain).

It is found in the nucleus. The protein resides in the nucleolus. It localises to the nucleoplasm. Component of the NOP7 complex, which is required for maturation of the 25S and 5.8S ribosomal RNAs and formation of the 60S ribosome. The protein is Ribosome biogenesis protein YTM1 of Coccidioides immitis (strain RS) (Valley fever fungus).